Consider the following 239-residue polypeptide: MGQKINPLGFRLGTTQNHHSFWFAQPKNYSEGLQEDKKIRNCIKNYIQKNRKKGSNRKIEADSSFEVITHNKKMDSGSSSEVITHIEIQKEIDTIHVIIHIGFPNLLKKKGAIEELEKDLQKEVNSVNQRLNIGIEKVKEPYRQPNILAEYIAFQLKNRVSFRKAMKKAIELTKKTDIKGVKVKIAGRLAGKEIARAECIKKGRLPLQTIRAKIDYCCYPIRTIYGVLGVKIWIFVDEE.

The KH type-2 domain maps to 43-139 (IKNYIQKNRK…RLNIGIEKVK (97 aa)).

This sequence belongs to the universal ribosomal protein uS3 family. In terms of assembly, part of the 30S ribosomal subunit.

The protein resides in the plastid. Its subcellular location is the chloroplast. The protein is Small ribosomal subunit protein uS3c (rps3) of Oryza nivara (Indian wild rice).